We begin with the raw amino-acid sequence, 801 residues long: Mitochondrial intermediate peptidase (801 aa).

A mitochondrion-targeting transit peptide spans 1–41; sequence MKDQLLVPLRRRPWTCQKCLQRLQLPRHQTRRSFETAASPF. Zn(2+) is bound at residue histidine 564. Glutamate 565 is a catalytic residue. Zn(2+) is bound by residues histidine 568 and histidine 571.

This sequence belongs to the peptidase M3 family. Requires Zn(2+) as cofactor.

Its subcellular location is the mitochondrion matrix. It carries out the reaction Release of an N-terminal octapeptide as second stage of processing of some proteins imported into the mitochondrion.. In terms of biological role, cleaves proteins, imported into the mitochondrion, to their mature size. While most mitochondrial precursor proteins are processed to the mature form in one step by mitochondrial processing peptidase (MPP), the sequential cleavage by MIP of an octapeptide after initial processing by MPP is a required step for a subgroup of nuclear-encoded precursor proteins destined for the matrix or the inner membrane. In Aspergillus fumigatus (strain CBS 144.89 / FGSC A1163 / CEA10) (Neosartorya fumigata), this protein is Mitochondrial intermediate peptidase (oct1).